The primary structure comprises 459 residues: N,N-dimethyl phenylurea N-demethylase subunit alpha (459 aa).

A Rieske domain is found at 55–166; the sequence is WVFVAHETEI…VESYHGFIFT (112 aa). Residues C97, H99, C117, and H120 each contribute to the [2Fe-2S] cluster site. The Fe cation site is built by H225, H230, and D386.

It belongs to the bacterial ring-hydroxylating dioxygenase alpha subunit family. PdmA (subunit alpha) and PdmB (subunit beta) form the oxygenase component of a bacterial Rieske non-heme iron oxygenase (RO) system. [2Fe-2S] cluster serves as cofactor. It depends on Fe cation as a cofactor.

The enzyme catalyses a 1,1-dimethyl-3-phenylurea + 2 reduced [2Fe-2S]-[ferredoxin] + O2 + 2 H(+) = a 1-methyl-3-phenylurea + formaldehyde + 2 oxidized [2Fe-2S]-[ferredoxin] + H2O. It catalyses the reaction isoproturon + 2 reduced [2Fe-2S]-[ferredoxin] + O2 + 2 H(+) = 1-methyl-3-[4-(propan-2-yl)phenyl]urea + formaldehyde + 2 oxidized [2Fe-2S]-[ferredoxin] + H2O. It carries out the reaction chlorotoluron + 2 reduced [2Fe-2S]-[ferredoxin] + O2 + 2 H(+) = 3-(3-chloro-4-methylphenyl)-1-methylurea + formaldehyde + 2 oxidized [2Fe-2S]-[ferredoxin] + H2O. The catalysed reaction is metoxuron + 2 reduced [2Fe-2S]-[ferredoxin] + O2 + 2 H(+) = 3-(3-chloro-4-methoxylphenyl)-1-methylurea + formaldehyde + 2 oxidized [2Fe-2S]-[ferredoxin] + H2O. The enzyme catalyses monuron + 2 reduced [2Fe-2S]-[ferredoxin] + O2 + 2 H(+) = 3-(4-chlorophenyl)-1-methylurea + formaldehyde + 2 oxidized [2Fe-2S]-[ferredoxin] + H2O. It catalyses the reaction diuron + 2 reduced [2Fe-2S]-[ferredoxin] + O2 + 2 H(+) = 3-(3,4-dichlorophenyl)-1-methylurea + formaldehyde + 2 oxidized [2Fe-2S]-[ferredoxin] + H2O. It carries out the reaction fluometuron + 2 reduced [2Fe-2S]-[ferredoxin] + O2 + 2 H(+) = 3-[3-(trifluoromethyl)phenyl]-1-methylurea + formaldehyde + 2 oxidized [2Fe-2S]-[ferredoxin] + H2O. The catalysed reaction is fenuron + 2 reduced [2Fe-2S]-[ferredoxin] + O2 + 2 H(+) = 1-methyl-3-phenylurea + formaldehyde + 2 oxidized [2Fe-2S]-[ferredoxin] + H2O. Its pathway is xenobiotic degradation. With respect to regulation, activity is stimulated in vitro by coexpression of a [3Fe-4S]-type ferredoxin. In terms of biological role, part of the multicomponent N,N-dimethyl phenylurea N-demethylase responsible for the initial N-demethylation step during the bacterial metabolism of N,N-dimethyl-substituted phenylurea herbicides. Catalyzes the mono-N-demethylation of N,N-dimethyl-substituted phenylurea herbicides to their mono-N-demethylated derivatives. Is active on isoproturon (IPU), chlorotoluron, metoxuron, monoron, diuron, fluometuron and fenuron, but cannot transform the N-methoxy-N-methyl-substituted herbicides. This is N,N-dimethyl phenylurea N-demethylase subunit alpha from Sphingobium sp. (strain YBL2).